A 208-amino-acid chain; its full sequence is Inner membrane-spanning protein YciB (208 aa).

5 consecutive transmembrane segments (helical) span residues 49-69, 78-98, 105-125, 150-170, and 178-198; these read APVLLATVVVIVATLAQILWL, TMLWVSLALVTALGSATIYFH, WKPTVLYWVMGASLLVGELVF, FSWVAFFAAMGCLNLWVAFNF, and FKLFGGMGLMLVFVLAQAFFL.

This sequence belongs to the YciB family.

The protein localises to the cell inner membrane. In terms of biological role, plays a role in cell envelope biogenesis, maintenance of cell envelope integrity and membrane homeostasis. This chain is Inner membrane-spanning protein YciB, found in Polaromonas naphthalenivorans (strain CJ2).